The following is a 609-amino-acid chain: Putative 4-coumarate--CoA ligase-like 8 (609 aa).

Positions 194, 195, 196, 197, 198, and 202 each coordinate ATP. F252 and S256 together coordinate (E)-4-coumaroyl-AMP. R274 lines the CoA pocket. Residues 276-348 form an SBD1 region; the sequence is SVEKTMAAVE…SCFPAVNLGQ (73 aa). Residues G326, Q348, T353, and M361 each coordinate (E)-4-coumaroyl-AMP. Residues Q348 and T353 each contribute to the ATP site. The interval 349-450 is SBD2; sequence CYGLTETTGI…VRGPSTMRGY (102 aa). ATP-binding residues include D482 and R497. (E)-4-coumaroyl-AMP is bound by residues K499 and K503. CoA is bound at residue A506. ATP is bound at residue K589.

Belongs to the ATP-dependent AMP-binding enzyme family. Requires Mg(2+) as cofactor.

The enzyme catalyses (E)-4-coumarate + ATP + CoA = (E)-4-coumaroyl-CoA + AMP + diphosphate. It catalyses the reaction (E)-4-coumarate + ATP + H(+) = (E)-4-coumaroyl-AMP + diphosphate. The catalysed reaction is (E)-4-coumaroyl-AMP + CoA = (E)-4-coumaroyl-CoA + AMP + H(+). Carboxylate--CoA ligase that may use 4-coumarate as substrate. Follows a two-step reaction mechanism, wherein the carboxylate substrate first undergoes adenylation by ATP, followed by a thioesterification in the presence of CoA to yield the final CoA thioester. The sequence is that of Putative 4-coumarate--CoA ligase-like 8 (4CLL8) from Oryza sativa subsp. japonica (Rice).